Consider the following 368-residue polypeptide: MNKTIMALAIMMASFAANASVLPETPVPFKSGTGAIDNDTVYIGLGSAGTAWYKLDTQAKDKKWTALAAFPGGPREQATSAFIDGNLYVFGGIGKNSEGLTQVFNDVHKYNPKTNSWVKLMSHAPMGMAGHVTFVHNGKAYVTGGVNQNIFNGYFEDLNEAGKDSTAIDKINAHYFDKKAEDYFFNKFLLSFDPSTQQWSYAGESPWYGTAGAAVVNKGDKTWLINGEAKPGLRTDAVFELDFTGNNLKWNKLDPVSSPDGVAGGFAGISNDSLIFAGGAGFKGSRENYQNGKNYAHEGLKKSYSTDIHLWHNGKWDKSGELSQGRAYGVSLPWNNSLLIIGGETAGGKAVTDSVLISVKDNKVTVQN.

The N-terminal stretch at 1–19 (MNKTIMALAIMMASFAANA) is a signal peptide. Kelch repeat units lie at residues 40 to 84 (TVYI…AFID), 86 to 137 (NLYV…FVHN), 139 to 173 (KAYV…KINA), 174 to 219 (HYFD…VNKG), 222 to 265 (TWLI…VAGG), 287 to 336 (ENYQ…PWNN), and 338 to 367 (LLII…VTVQ). Residue Glu-228 is the Proton acceptor of the active site.

Belongs to the NanM family. In terms of assembly, homodimer.

It is found in the periplasm. The enzyme catalyses N-acetyl-alpha-neuraminate = N-acetyl-beta-neuraminate. Converts alpha-N-acetylneuranimic acid (Neu5Ac) to the beta-anomer, accelerating the equilibrium between the alpha- and beta-anomers. Probably facilitates sialidase-negative bacteria to compete successfully for limited amounts of extracellular Neu5Ac, which is likely taken up in the beta-anomer. In addition, the rapid removal of sialic acid from solution might be advantageous to the bacterium to damp down host responses. The polypeptide is N-acetylneuraminate epimerase (Shigella flexneri serotype 5b (strain 8401)).